A 367-amino-acid chain; its full sequence is Serine/threonine-protein kinase Sgk2 (367 aa).

Residues 1–28 (MASSPVGVPSPQPSRANGNINLGPSANP) form a disordered region. Position 10 is a phosphoserine (S10). Residues 15 to 28 (RANGNINLGPSANP) show a composition bias toward polar residues. Residues 35-292 (FDFLKVIGKG…FLDIKNHMFF (258 aa)) enclose the Protein kinase domain. ATP is bound by residues 41 to 49 (IGKGNYGKV) and K64. Residues 68–78 (KKSILKNKEQN) carry the Nuclear localization signal motif. D159 acts as the Proton acceptor in catalysis. At T193 the chain carries Phosphothreonine; by PDPK1. Residues 293–367 (SPINWDDLYH…AQDDDDILDS (75 aa)) form the AGC-kinase C-terminal domain. A phosphoserine mark is found at S334 and S356. Y357 is subject to Phosphotyrosine.

This sequence belongs to the protein kinase superfamily. AGC Ser/Thr protein kinase family. Activated by phosphorylation on Ser-356 by an unknown kinase (may be mTORC2 but not confirmed), transforming it into a substrate for PDPK1 which then phosphorylates it on Thr-193.

The protein localises to the cytoplasm. It localises to the nucleus. It carries out the reaction L-seryl-[protein] + ATP = O-phospho-L-seryl-[protein] + ADP + H(+). The enzyme catalyses L-threonyl-[protein] + ATP = O-phospho-L-threonyl-[protein] + ADP + H(+). Its activity is regulated as follows. Two specific sites, one in the kinase domain (Thr-193) and the other in the C-terminal regulatory region (Ser-356), need to be phosphorylated for its full activation. In terms of biological role, serine/threonine-protein kinase which is involved in the regulation of a wide variety of ion channels, membrane transporters, cell growth, survival and proliferation. Up-regulates Na(+) channels: SCNN1A/ENAC, K(+) channels: KCNA3/Kv1.3, KCNE1 and KCNQ1, amino acid transporter: SLC6A19, glutamate transporter: SLC1A6/EAAT4, glutamate receptors: GRIA1/GLUR1 and GRIK2/GLUR6, Na(+)/H(+) exchanger: SLC9A3/NHE3, and the Na(+)/K(+) ATPase. This chain is Serine/threonine-protein kinase Sgk2 (Sgk2), found in Mus musculus (Mouse).